The sequence spans 78 residues: Large ribosomal subunit protein eL20 (78 aa).

It belongs to the eukaryotic ribosomal protein eL20 family. As to quaternary structure, part of the 50S ribosomal subunit. Binds 23S rRNA.

This Pyrobaculum islandicum (strain DSM 4184 / JCM 9189 / GEO3) protein is Large ribosomal subunit protein eL20.